We begin with the raw amino-acid sequence, 88 residues long: Exodeoxyribonuclease 7 small subunit (88 aa).

The disordered stretch occupies residues 68–88 (SDPMHPDDGEPFDPSLVSTSQ).

It belongs to the XseB family. As to quaternary structure, heterooligomer composed of large and small subunits.

The protein localises to the cytoplasm. It carries out the reaction Exonucleolytic cleavage in either 5'- to 3'- or 3'- to 5'-direction to yield nucleoside 5'-phosphates.. Bidirectionally degrades single-stranded DNA into large acid-insoluble oligonucleotides, which are then degraded further into small acid-soluble oligonucleotides. This is Exodeoxyribonuclease 7 small subunit from Xylella fastidiosa (strain 9a5c).